The chain runs to 742 residues: ATP-dependent RNA helicase DBP7 (742 aa).

Positions 45 to 100 (GKTVSRKRKANTTGDEGIIPGRGENSIKKLHKESSYSSEEQEKYKGRNAHNTQGRT) are disordered. The short motif at 143 to 172 (DQFASLGVSSLLVSHLEQKMRIKKPTSIQK) is the Q motif element. Positions 178–372 (IIGNAGKNDF…NVALKDYKLI (195 aa)) constitute a Helicase ATP-binding domain. Residue 191 to 198 (AQTGSGKT) participates in ATP binding. A DEGD box motif is present at residues 307–310 (DEGD). A Helicase C-terminal domain is found at 405-605 (TLAATLNNIT…ILMPAFKDVN (201 aa)). Residues 701-726 (AMGLQSSKDGNSEKKPTKENSKNKMF) are disordered. Basic and acidic residues predominate over residues 710-722 (GNSEKKPTKENSK).

Belongs to the DEAD box helicase family. DDX31/DBP7 subfamily.

It localises to the nucleus. The protein resides in the nucleolus. It catalyses the reaction ATP + H2O = ADP + phosphate + H(+). Functionally, ATP-binding RNA helicase involved in the biogenesis of 60S ribosomal subunits and is required for the normal formation of 25S and 5.8S rRNAs. The chain is ATP-dependent RNA helicase DBP7 (DBP7) from Saccharomyces cerevisiae (strain ATCC 204508 / S288c) (Baker's yeast).